Here is a 697-residue protein sequence, read N- to C-terminus: MSTLLIELLTEELPPKALARLGEAFAQSLFDGLSAQGLLEEGAQVEGFATPRRLAASITGVRRAAPDRELREKVLPVNIAFDAEGKPTAPLTKKLAALAKSIGADTIAPESLERAPDGKAESLFHRYTARGAVLADGLQAALSQTIAGLPIPKVMIYQRPNGDNVQFVRPAHRLIALLDDEIIPAGVLGLQSGNVTLGHRFLSAGEIIIPHATAYASTLKSQGKVIAGYAERKEAIRAELLKAAGADTVVMPEALLDEVNALVEWPVVYPCHFEEQFLAVPQECLILTMQTNQKYFALTDAQGHLRNRFLIVSNLATETPQAIIEGNERVVRPRLADARFFFEHDKKKPLADRVPQLARVVYHNKIGTQLERVSRLQAIAGQLAEKLGAEVAHASRAALLAKADLLTDMVGEFPELQGTMGTYYARHDGEAEDVALACSEHYQPRFAGDALPGTATGTVVALADKLETLVGIWGIGLAPTGEKDPFALRRHALGILRMLIEKPLALGIAEVLEAAAASFEGIAAVKPDLAAITDFLYDRLRGYLKDKGYSTNEVEAVVSQRPQRLDDIVARLEAVRAFAALPQAEALAAANKRITNILKKTDITIGSVQPQLLREDAERALHQAVATSEPHVHDAFARGDFTTALKTLASLREAVDSFFDGVMVMADDTALRDNRLALLGELHGLMNRVADISKLAA.

Belongs to the class-II aminoacyl-tRNA synthetase family. As to quaternary structure, tetramer of two alpha and two beta subunits.

The protein resides in the cytoplasm. It catalyses the reaction tRNA(Gly) + glycine + ATP = glycyl-tRNA(Gly) + AMP + diphosphate. This Ralstonia nicotianae (strain ATCC BAA-1114 / GMI1000) (Ralstonia solanacearum) protein is Glycine--tRNA ligase beta subunit.